We begin with the raw amino-acid sequence, 597 residues long: tRNA uridine 5-carboxymethylaminomethyl modification enzyme MnmG (597 aa).

FAD is bound at residue 11-16 (GAGHAG). Position 275–289 (275–289 (SPRYCPSIEEKIERY)) interacts with NAD(+).

It belongs to the MnmG family. In terms of assembly, homodimer. Heterotetramer of two MnmE and two MnmG subunits. It depends on FAD as a cofactor.

Its subcellular location is the cytoplasm. Its function is as follows. NAD-binding protein involved in the addition of a carboxymethylaminomethyl (cmnm) group at the wobble position (U34) of certain tRNAs, forming tRNA-cmnm(5)s(2)U34. The chain is tRNA uridine 5-carboxymethylaminomethyl modification enzyme MnmG from Endomicrobium trichonymphae.